Consider the following 523-residue polypeptide: Cyclin-dependent kinase 17 (523 aa).

Ser9 bears the Phosphoserine mark. The tract at residues 30–55 (TIEESSSKDNEPIVKNGRPPTSHSVH) is disordered. Ser80, Ser92, and Ser105 each carry phosphoserine. The segment at 103–123 (MGSDGESDQASGTSSDEVQSP) is disordered. A compositionally biased stretch (polar residues) spans 110 to 123 (DQASGTSSDEVQSP). Phosphoserine occurs at positions 137, 146, 165, and 180. The Protein kinase domain maps to 192–473 (YIKLEKLGEG…AEEAMKHVYF (282 aa)). ATP-binding positions include 198–206 (LGEGTYATV) and Lys221. The active-site Proton acceptor is Asp313. The disordered stretch occupies residues 501 to 523 (PGFRNSSYPETGHGKNRRQSMLF). Positions 514-523 (GKNRRQSMLF) are enriched in basic residues.

Belongs to the protein kinase superfamily. CMGC Ser/Thr protein kinase family. CDC2/CDKX subfamily. In terms of assembly, found in a complex containing CABLES1, CDK16 and TDRD7. Interacts with TDRD7.

It catalyses the reaction L-seryl-[protein] + ATP = O-phospho-L-seryl-[protein] + ADP + H(+). The catalysed reaction is L-threonyl-[protein] + ATP = O-phospho-L-threonyl-[protein] + ADP + H(+). May play a role in terminally differentiated neurons. Has a Ser/Thr-phosphorylating activity for histone H1. The polypeptide is Cyclin-dependent kinase 17 (Cdk17) (Mus musculus (Mouse)).